A 112-amino-acid chain; its full sequence is Ciliary microtubule inner protein 3 (112 aa).

The segment at 1–34 (MCKDSQKPSVPSHGPKTPSCKGVKAPHSSRPRAW) is disordered.

This sequence belongs to the CIMIP3-like family.

The protein localises to the cytoplasm. It localises to the cytoskeleton. The protein resides in the flagellum axoneme. The polypeptide is Ciliary microtubule inner protein 3 (Homo sapiens (Human)).